The chain runs to 305 residues: tRNA uridine(34) hydroxylase (305 aa).

The region spanning 125–219 is the Rhodanese domain; that stretch reads ADENTVVVDT…YLEEVPREDS (95 aa). The active-site Cysteine persulfide intermediate is C179.

Belongs to the TrhO family.

It carries out the reaction uridine(34) in tRNA + AH2 + O2 = 5-hydroxyuridine(34) in tRNA + A + H2O. Its function is as follows. Catalyzes oxygen-dependent 5-hydroxyuridine (ho5U) modification at position 34 in tRNAs. This is tRNA uridine(34) hydroxylase from Brucella anthropi (strain ATCC 49188 / DSM 6882 / CCUG 24695 / JCM 21032 / LMG 3331 / NBRC 15819 / NCTC 12168 / Alc 37) (Ochrobactrum anthropi).